A 415-amino-acid polypeptide reads, in one-letter code: Tyrosine--tRNA ligase (415 aa).

Residue Tyr34 participates in L-tyrosine binding. Positions 39–48 (PTADSLHLGH) match the 'HIGH' region motif. L-tyrosine contacts are provided by Tyr164 and Gln168. Residues 226-230 (KFGKS) carry the 'KMSKS' region motif. Lys229 provides a ligand contact to ATP. The S4 RNA-binding domain maps to 348-415 (KNVVDFLVDG…KKKYFLGKVK (68 aa)).

Belongs to the class-I aminoacyl-tRNA synthetase family. TyrS type 1 subfamily. As to quaternary structure, homodimer.

The protein localises to the cytoplasm. The enzyme catalyses tRNA(Tyr) + L-tyrosine + ATP = L-tyrosyl-tRNA(Tyr) + AMP + diphosphate + H(+). Functionally, catalyzes the attachment of tyrosine to tRNA(Tyr) in a two-step reaction: tyrosine is first activated by ATP to form Tyr-AMP and then transferred to the acceptor end of tRNA(Tyr). In Leuconostoc mesenteroides subsp. mesenteroides (strain ATCC 8293 / DSM 20343 / BCRC 11652 / CCM 1803 / JCM 6124 / NCDO 523 / NBRC 100496 / NCIMB 8023 / NCTC 12954 / NRRL B-1118 / 37Y), this protein is Tyrosine--tRNA ligase.